The sequence spans 783 residues: NADH-quinone oxidoreductase subunit 3 (783 aa).

Positions 1 to 99 (MVRVKVNDRI…GMVVDTLSDV (99 aa)) constitute a 2Fe-2S ferredoxin-type domain. Residues C34, C45, C48, and C83 each coordinate [2Fe-2S] cluster. The 40-residue stretch at 99–138 (VVREAQAGMVEFTLLNHPLDCPTCDKGGACELQDRTVEYG) folds into the 4Fe-4S His(Cys)3-ligated-type domain. The [4Fe-4S] cluster site is built by H115, C119, C122, C128, C181, C184, C187, C230, C256, C259, C263, and C291. A 4Fe-4S Mo/W bis-MGD-type domain is found at 249–305 (MEETPTTCALCPVGCGITADTRSGELLRIRAREVPEVNEIWICDAGRFGHEWADQNR).

Belongs to the complex I 75 kDa subunit family. As to quaternary structure, NDH-1 is composed of 15 different subunits, Nqo1 to Nqo15. The complex has a L-shaped structure, with the hydrophobic arm (subunits Nqo7, Nqo8 and Nqo10 to Nqo14) embedded in the membrane and the hydrophilic peripheral arm (subunits Nqo1 to Nqo6, Nqo9 and Nqo15) protruding into the bacterial cytoplasm. The hydrophilic domain contains all the redox centers. The cofactor is [2Fe-2S] cluster. [4Fe-4S] cluster serves as cofactor.

Its subcellular location is the cell membrane. It carries out the reaction a quinone + NADH + 5 H(+)(in) = a quinol + NAD(+) + 4 H(+)(out). NDH-1 shuttles electrons from NADH, via FMN and iron-sulfur (Fe-S) centers, to quinones in the respiratory chain. The immediate electron acceptor for the enzyme in this species is menaquinone. Couples the redox reaction to proton translocation (for every two electrons transferred, four hydrogen ions are translocated across the cytoplasmic membrane), and thus conserves the redox energy in a proton gradient required for the synthesis of ATP. This is NADH-quinone oxidoreductase subunit 3 (nqo3) from Thermus thermophilus (strain ATCC 27634 / DSM 579 / HB8).